The sequence spans 675 residues: UvrABC system protein B (675 aa).

Positions 32 to 417 (EGLSDGLAYQ…EHAGQVVEQV (386 aa)) constitute a Helicase ATP-binding domain. 45–52 (GVTGSGKT) contacts ATP. The Beta-hairpin motif lies at 98–121 (YYDYYQPEAYVPSRDLFIEKDSAI). The Helicase C-terminal domain maps to 436–602 (QVDDLMSEIN…QIKKQVKDII (167 aa)). One can recognise a UVR domain in the interval 634–669 (IKEIAKLEKAMQQAARDLQFEEAAVLRDRIRDIKEN).

It belongs to the UvrB family. In terms of assembly, forms a heterotetramer with UvrA during the search for lesions. Interacts with UvrC in an incision complex.

Its subcellular location is the cytoplasm. In terms of biological role, the UvrABC repair system catalyzes the recognition and processing of DNA lesions. A damage recognition complex composed of 2 UvrA and 2 UvrB subunits scans DNA for abnormalities. Upon binding of the UvrA(2)B(2) complex to a putative damaged site, the DNA wraps around one UvrB monomer. DNA wrap is dependent on ATP binding by UvrB and probably causes local melting of the DNA helix, facilitating insertion of UvrB beta-hairpin between the DNA strands. Then UvrB probes one DNA strand for the presence of a lesion. If a lesion is found the UvrA subunits dissociate and the UvrB-DNA preincision complex is formed. This complex is subsequently bound by UvrC and the second UvrB is released. If no lesion is found, the DNA wraps around the other UvrB subunit that will check the other stand for damage. The sequence is that of UvrABC system protein B from Neisseria meningitidis serogroup B (strain ATCC BAA-335 / MC58).